A 117-amino-acid polypeptide reads, in one-letter code: Large ribosomal subunit protein uL22 (117 aa).

This sequence belongs to the universal ribosomal protein uL22 family. Part of the 50S ribosomal subunit.

This protein binds specifically to 23S rRNA; its binding is stimulated by other ribosomal proteins, e.g. L4, L17, and L20. It is important during the early stages of 50S assembly. It makes multiple contacts with different domains of the 23S rRNA in the assembled 50S subunit and ribosome. Its function is as follows. The globular domain of the protein is located near the polypeptide exit tunnel on the outside of the subunit, while an extended beta-hairpin is found that lines the wall of the exit tunnel in the center of the 70S ribosome. The polypeptide is Large ribosomal subunit protein uL22 (Lactobacillus delbrueckii subsp. bulgaricus (strain ATCC 11842 / DSM 20081 / BCRC 10696 / JCM 1002 / NBRC 13953 / NCIMB 11778 / NCTC 12712 / WDCM 00102 / Lb 14)).